Consider the following 218-residue polypeptide: Protein GrpE (218 aa).

Positions 1–78 (MSEFNKDDYL…DSADTLTPLG (78 aa)) are disordered. A compositionally biased stretch (low complexity) spans 14 to 58 (PDPSDAEAAAQASSGADASAESGSAQDSAAQAPSNEGADAAPAAA).

It belongs to the GrpE family. Homodimer.

It is found in the cytoplasm. Functionally, participates actively in the response to hyperosmotic and heat shock by preventing the aggregation of stress-denatured proteins, in association with DnaK and GrpE. It is the nucleotide exchange factor for DnaK and may function as a thermosensor. Unfolded proteins bind initially to DnaJ; upon interaction with the DnaJ-bound protein, DnaK hydrolyzes its bound ATP, resulting in the formation of a stable complex. GrpE releases ADP from DnaK; ATP binding to DnaK triggers the release of the substrate protein, thus completing the reaction cycle. Several rounds of ATP-dependent interactions between DnaJ, DnaK and GrpE are required for fully efficient folding. In Bifidobacterium longum (strain NCC 2705), this protein is Protein GrpE.